A 467-amino-acid chain; its full sequence is ATP synthase subunit beta (467 aa).

ATP is bound at residue 150-157 (GGAGVGKT).

Belongs to the ATPase alpha/beta chains family. F-type ATPases have 2 components, CF(1) - the catalytic core - and CF(0) - the membrane proton channel. CF(1) has five subunits: alpha(3), beta(3), gamma(1), delta(1), epsilon(1). CF(0) has three main subunits: a(1), b(2) and c(9-12). The alpha and beta chains form an alternating ring which encloses part of the gamma chain. CF(1) is attached to CF(0) by a central stalk formed by the gamma and epsilon chains, while a peripheral stalk is formed by the delta and b chains.

The protein resides in the cell inner membrane. It catalyses the reaction ATP + H2O + 4 H(+)(in) = ADP + phosphate + 5 H(+)(out). Functionally, produces ATP from ADP in the presence of a proton gradient across the membrane. The catalytic sites are hosted primarily by the beta subunits. The polypeptide is ATP synthase subunit beta (Polaromonas sp. (strain JS666 / ATCC BAA-500)).